The following is a 301-amino-acid chain: Probable alpha-L-glutamate ligase 1 (301 aa).

One can recognise an ATP-grasp domain in the interval 104–287 (LQLLSRKGIG…VTEPIVEYIE (184 aa)). Residues Lys141, 178-179 (EY), Asp187, and 211-213 (RSN) contribute to the ATP site. Positions 248, 260, and 262 each coordinate Mg(2+). Residues Asp248, Glu260, and Asn262 each coordinate Mn(2+).

Belongs to the RimK family. It depends on Mg(2+) as a cofactor. Mn(2+) serves as cofactor.

The polypeptide is Probable alpha-L-glutamate ligase 1 (Shewanella oneidensis (strain ATCC 700550 / JCM 31522 / CIP 106686 / LMG 19005 / NCIMB 14063 / MR-1)).